Consider the following 558-residue polypeptide: Transcription factor RelB (558 aa).

Residues 1-11 (MPSRRAARESA) show a composition bias toward basic and acidic residues. Positions 1-21 (MPSRRAARESAPELGALGSSD) are disordered. Residue Ser-19 is modified to Phosphoserine. The leucine-zipper stretch occupies residues 22–50 (LSSLSLTVSRTTDELEIIDEYIKENGFGL). A Phosphothreonine modification is found at Thr-84. In terms of domain architecture, RHD spans 103 to 418 (PYLVITEQPK…ESKRRKKKPV (316 aa)). 2 consecutive short sequence motifs (nuclear localization signal) follow at residues 387-391 (KKRKR) and 411-416 (KRRKKK). Ser-552 bears the Phosphoserine mark.

As to quaternary structure, component of the NF-kappa-B RelB-p50 complex. Component of the NF-kappa-B RelB-p52 complex. Self-associates; the interaction seems to be transient and may prevent degradation allowing for heterodimer formation p50 or p52. Interacts with NFKB1/p50, NFKB2/p52 and NFKB2/p100. Interacts with NFKBID. Interacts with BMAL1 and the interaction is enhanced in the presence of CLOCK. Phosphorylation at 'Thr-103' and 'Ser-573' is followed by proteasomal degradation. In terms of tissue distribution, expressed in intestine, thymus and spleen. Undetectable in liver, bome marrow, kidney and testis.

The protein localises to the nucleus. It is found in the cytoplasm. The protein resides in the cytoskeleton. Its subcellular location is the microtubule organizing center. It localises to the centrosome. Its function is as follows. NF-kappa-B is a pleiotropic transcription factor which is present in almost all cell types and is involved in many biological processed such as inflammation, immunity, differentiation, cell growth, tumorigenesis and apoptosis. NF-kappa-B is a homo- or heterodimeric complex formed by the Rel-like domain-containing proteins RELA/p65, RELB, NFKB1/p105, NFKB1/p50, REL and NFKB2/p52. The dimers bind at kappa-B sites in the DNA of their target genes and the individual dimers have distinct preferences for different kappa-B sites that they can bind with distinguishable affinity and specificity. Different dimer combinations act as transcriptional activators or repressors, respectively. NF-kappa-B is controlled by various mechanisms of post-translational modification and subcellular compartmentalization as well as by interactions with other cofactors or corepressors. NF-kappa-B complexes are held in the cytoplasm in an inactive state complexed with members of the NF-kappa-B inhibitor (I-kappa-B) family. In a conventional activation pathway, I-kappa-B is phosphorylated by I-kappa-B kinases (IKKs) in response to different activators, subsequently degraded thus liberating the active NF-kappa-B complex which translocates to the nucleus. NF-kappa-B heterodimeric RelB-p50 and RelB-p52 complexes are transcriptional activators. RELB neither associates with DNA nor with RELA/p65 or REL. Stimulates promoter activity in the presence of NFKB2/p49. As a member of the NUPR1/RELB/IER3 survival pathway, may allow the development of pancreatic intraepithelial neoplasias. Regulates the circadian clock by repressing the transcriptional activator activity of the CLOCK-BMAL1 heterodimer in a CRY1/CRY2 independent manner. Increased repression of the heterodimer is seen in the presence of NFKB2/p52. Is required for both T and B lymphocyte maturation and function. The sequence is that of Transcription factor RelB (Relb) from Mus musculus (Mouse).